The chain runs to 235 residues: uncharacterized protein (235 aa).

It belongs to the UreF family.

Its subcellular location is the cytoplasm. The protein localises to the nucleus. Its function is as follows. Probably facilitates nickel incorporation. This is an uncharacterized protein from Schizosaccharomyces pombe (strain 972 / ATCC 24843) (Fission yeast).